Reading from the N-terminus, the 122-residue chain is Large ribosomal subunit protein uL14 (122 aa).

The protein belongs to the universal ribosomal protein uL14 family. As to quaternary structure, part of the 50S ribosomal subunit. Forms a cluster with proteins L3 and L19. In the 70S ribosome, L14 and L19 interact and together make contacts with the 16S rRNA in bridges B5 and B8.

Functionally, binds to 23S rRNA. Forms part of two intersubunit bridges in the 70S ribosome. This Limosilactobacillus reuteri (strain DSM 20016) (Lactobacillus reuteri) protein is Large ribosomal subunit protein uL14.